Here is a 316-residue protein sequence, read N- to C-terminus: tRNA dimethylallyltransferase (316 aa).

Residue 15-22 (GPTASGKS) participates in ATP binding. 17-22 (TASGKS) contacts substrate. The segment at 40–43 (DSRQ) is interaction with substrate tRNA.

The protein belongs to the IPP transferase family. In terms of assembly, monomer. Requires Mg(2+) as cofactor.

It carries out the reaction adenosine(37) in tRNA + dimethylallyl diphosphate = N(6)-dimethylallyladenosine(37) in tRNA + diphosphate. Functionally, catalyzes the transfer of a dimethylallyl group onto the adenine at position 37 in tRNAs that read codons beginning with uridine, leading to the formation of N6-(dimethylallyl)adenosine (i(6)A). This is tRNA dimethylallyltransferase from Chlorobium limicola (strain DSM 245 / NBRC 103803 / 6330).